We begin with the raw amino-acid sequence, 246 residues long: 2,3-bisphosphoglycerate-dependent phosphoglycerate mutase (246 aa).

Residues 9 to 16 (RHGQSAWN), 22 to 23 (TG), arginine 61, 88 to 91 (ERHY), lysine 99, 115 to 116 (RR), and 181 to 182 (GN) each bind substrate. Residue histidine 10 is the Tele-phosphohistidine intermediate of the active site. Glutamate 88 (proton donor/acceptor) is an active-site residue.

It belongs to the phosphoglycerate mutase family. BPG-dependent PGAM subfamily.

It catalyses the reaction (2R)-2-phosphoglycerate = (2R)-3-phosphoglycerate. It participates in carbohydrate degradation; glycolysis; pyruvate from D-glyceraldehyde 3-phosphate: step 3/5. Its function is as follows. Catalyzes the interconversion of 2-phosphoglycerate and 3-phosphoglycerate. In Bifidobacterium longum (strain DJO10A), this protein is 2,3-bisphosphoglycerate-dependent phosphoglycerate mutase.